We begin with the raw amino-acid sequence, 218 residues long: DNA-directed RNA polymerase III subunit RPC7-like (218 aa).

The disordered stretch occupies residues 130-218 (TIILPKRPPK…SDDNMDEAIY (89 aa)). Over residues 139–160 (KTTEDKEETIQKLETLEKKEEE) the composition is skewed to basic and acidic residues. Composition is skewed to acidic residues over residues 161–193 (VTSEEDEEKEEEEEKEEEEEEEYDEEEHEEETD) and 201–218 (NGEDFGGDSDDNMDEAIY).

Belongs to the eukaryotic RPC7 RNA polymerase subunit family. Component of the RNA polymerase III (Pol III) complex consisting of 17 subunits. Pol III exists as two alternative complexes defined by the mutually exclusive incorporation of subunit POLR3G/RPC7alpha or POLR3GL/RPC7beta. Found in a trimeric complex with POLR3C/RPC3 and POLR3F/RPC6. Directly interacts with POLR3C.

Its subcellular location is the nucleus. DNA-dependent RNA polymerase catalyzes the transcription of DNA into RNA using the four ribonucleoside triphosphates as substrates. Specific peripheric component of RNA polymerase III which synthesizes small RNAs, such as 5S rRNA and tRNAs. In Bos taurus (Bovine), this protein is DNA-directed RNA polymerase III subunit RPC7-like (POLR3GL).